The chain runs to 287 residues: Efem/EfeO family lipoprotein (287 aa).

Residues 1–17 (MKKLPTILLASSLLLAA) form the signal peptide. A lipid anchor (N-palmitoyl cysteine) is attached at Cys-18. Residue Cys-18 is the site of S-diacylglycerol cysteine attachment. The segment at 20-50 (NNSHSDDNSNKDKQSQSSKGENKASLQKATK) is disordered. Positions 23-33 (HSDDNSNKDKQ) are enriched in basic and acidic residues.

It belongs to the EfeM/EfeO family.

Its subcellular location is the cell membrane. This Staphylococcus haemolyticus (strain JCSC1435) protein is Efem/EfeO family lipoprotein.